The sequence spans 162 residues: Selenoprotein F (162 aa).

The first 28 residues, 1–28 (MAARRDGWLGPAFGLRLLLATVLQTVSA), serve as a signal peptide directing secretion. A non-standard amino acid (selenocysteine) is located at residue selenocysteine 93.

The protein belongs to the selenoprotein M/F family. Forms a tight complex with UGGT1/UGCGL1. Interacts with UGGT2/UGCGL2. Interacts with RDH11.

The protein resides in the endoplasmic reticulum lumen. May be involved in redox reactions associated with the formation of disulfide bonds. May contribute to the quality control of protein folding in the endoplasmic reticulum. May regulate protein folding by enhancing the catalytic activity of UGGT1/UGCGL1 and UGGT2/UGCGL2. In Bos taurus (Bovine), this protein is Selenoprotein F.